Here is a 679-residue protein sequence, read N- to C-terminus: TBC1 domain family member 23 (679 aa).

The Rab-GAP TBC domain maps to glutamine 38 to alanine 219. One can recognise a Rhodanese domain in the interval glutamate 327–valine 439. Residues serine 454–serine 468 show a composition bias toward low complexity. The segment at serine 454 to valine 478 is disordered.

It localises to the golgi apparatus. It is found in the trans-Golgi network. Putative Rab GTPase-activating protein which plays a role in vesicular trafficking. Involved in endosome-to-Golgi trafficking. Acts as a bridging protein by binding simultaneously to golgins, located at the trans-Golgi, and to the WASH complex, located on endosome-derived vesicles. Plays a role in brain development. May act as a general inhibitor of innate immunity signaling. This is TBC1 domain family member 23 (TBC1D23) from Gallus gallus (Chicken).